We begin with the raw amino-acid sequence, 449 residues long: Na(+)/H(+) antiporter NhaA (449 aa).

Transmembrane regions (helical) follow at residues 30–50 (IFLI…WAGA), 69–89 (FGLT…FLVA), 112–132 (LLAA…LNLG), 138–158 (GWGI…GLLG), 168–188 (FLIA…ALFY), 192–212 (LSWI…LMNW), 218–238 (LIWY…SGIH), 241–261 (IAGV…SKIL), 312–332 (SLVD…NAGV), 348–368 (LGIL…FTLI), 386–406 (IIGI…ITNL), and 419–439 (ISIL…LLLT).

The protein belongs to the NhaA Na(+)/H(+) (TC 2.A.33) antiporter family.

The protein resides in the cell inner membrane. The enzyme catalyses Na(+)(in) + 2 H(+)(out) = Na(+)(out) + 2 H(+)(in). Its function is as follows. Na(+)/H(+) antiporter that extrudes sodium in exchange for external protons. This Christiangramia forsetii (strain DSM 17595 / CGMCC 1.15422 / KT0803) (Gramella forsetii) protein is Na(+)/H(+) antiporter NhaA.